The primary structure comprises 609 residues: UvrABC system protein C (609 aa).

The 79-residue stretch at His13–Val91 folds into the GIY-YIG domain. In terms of domain architecture, UVR spans Gln201–Val236.

This sequence belongs to the UvrC family. Interacts with UvrB in an incision complex.

Its subcellular location is the cytoplasm. Functionally, the UvrABC repair system catalyzes the recognition and processing of DNA lesions. UvrC both incises the 5' and 3' sides of the lesion. The N-terminal half is responsible for the 3' incision and the C-terminal half is responsible for the 5' incision. The chain is UvrABC system protein C from Haemophilus influenzae (strain ATCC 51907 / DSM 11121 / KW20 / Rd).